The chain runs to 1403 residues: Baculoviral IAP repeat-containing protein 1a (1403 aa).

BIR repeat units lie at residues arginine 63–glutamine 128, arginine 162–glutamine 228, and arginine 281–glutamine 346. Zn(2+) is bound by residues cysteine 315, cysteine 318, histidine 335, and cysteine 342. Positions serine 464–glutamate 758 constitute an NACHT domain. Lysine 476 is a binding site for ATP.

In terms of assembly, interacts (via NACHT domain) with APAF1 (via CARD and NACHT domains).

Anti-apoptotic protein which acts by inhibiting the activities of CASP3, CASP7 and CASP9. Can inhibit the autocleavage of pro-CASP9 and cleavage of pro-CASP3 by CASP9. Capable of inhibiting CASP9 autoproteolysis at 'Asp-315' and decreasing the rate of auto proteolysis at 'Asp-330'. Acts as a mediator of neuronal survival in pathological conditions. Prevents motor-neuron apoptosis induced by a variety of signals. This is Baculoviral IAP repeat-containing protein 1a (Naip1) from Mus musculus (Mouse).